The sequence spans 369 residues: MAVSLPLVFTAPRRGMPPKHLADLDSAERREAVKELGLPGFRADQLARQYYARLEADPEKMTDLPAAVREQVGAALFPTLLTPVKHLACDGGDTRKTLWKANDGTLLESVLMRYPDRATLCISSQAGCGMACPFCATGQGGLQRNLSTAEIVDQVRAAAAALRDGDVHGGPGRLSNVVFMGMGEPLANYKRVVAAVRRITSPAPDGLGLSQRSVTVSTVGLAPAIRKLADEDLSVTLAVSLHTPDDELRDTLVPVNNRWSVAEVLDAARYYADKSGRRVSIEYALIRDVNDQPWRADLLGKKLRKALGPLVHVNLIPLNPTPGSEWDASPKPVEKEFVRRVLAQGVSCTVRDTRGQEIAAACGQLAAEN.

The active-site Proton acceptor is E108. A Radical SAM core domain is found at 114–351 (YPDRATLCIS…LAQGVSCTVR (238 aa)). Cysteines 121 and 362 form a disulfide. The [4Fe-4S] cluster site is built by C128, C132, and C135. Residues 183 to 184 (GE), S217, 240 to 242 (SLH), and N319 each bind S-adenosyl-L-methionine. Residue C362 is the S-methylcysteine intermediate of the active site.

Belongs to the radical SAM superfamily. RlmN family. [4Fe-4S] cluster is required as a cofactor.

It localises to the cytoplasm. It carries out the reaction adenosine(2503) in 23S rRNA + 2 reduced [2Fe-2S]-[ferredoxin] + 2 S-adenosyl-L-methionine = 2-methyladenosine(2503) in 23S rRNA + 5'-deoxyadenosine + L-methionine + 2 oxidized [2Fe-2S]-[ferredoxin] + S-adenosyl-L-homocysteine. The catalysed reaction is adenosine(37) in tRNA + 2 reduced [2Fe-2S]-[ferredoxin] + 2 S-adenosyl-L-methionine = 2-methyladenosine(37) in tRNA + 5'-deoxyadenosine + L-methionine + 2 oxidized [2Fe-2S]-[ferredoxin] + S-adenosyl-L-homocysteine. Specifically methylates position 2 of adenine 2503 in 23S rRNA and position 2 of adenine 37 in tRNAs. This chain is Probable dual-specificity RNA methyltransferase RlmN, found in Rhodococcus jostii (strain RHA1).